The sequence spans 380 residues: MAPNLRKSHPLLKMVNNSLIDLPTPSNISAWWNFGSLLGICLATQILTGLLLAAHYTADTTLAFSSVAHTCRNVQHGWLIRNLHANGASFFFICIYLHIGRGLYYGSYLYKETWNTGVILLLTLMATAFVGYVLPWGQMSFWGATVITNLFSAVPYIGQTLVEWAWGGFSVDNPTLTRFFTLHFLLPFMIMGLTLIHLTFLHESGSNNPLGIVSNCDKIPFHPYFSLKDILGFMLMLLPLMTLALFSPNLLGDPENFPPANPLVTPPYIKPEWYFLFAYAILRSIPNKLGGVLALAASVLILFLAPLLHKSKQRTMTFRPLSQLLFWTLTANLLILTWVGSQPVEHPFMIIGQLASLTYFTILLVLFPITGALENKMLNY.

The next 4 helical transmembrane spans lie at 34-54, 78-99, 114-134, and 179-199; these read FGSL…LLAA, WLIR…YLHI, WNTG…GYVL, and FFTL…IHLT. Histidine 84 and histidine 98 together coordinate heme b. The heme b site is built by histidine 183 and histidine 197. Histidine 202 serves as a coordination point for a ubiquinone. 4 helical membrane passes run 227-247, 289-309, 321-341, and 348-368; these read LKDI…ALFS, LGGV…PLLH, LSQL…WVGS, and FMII…VLFP.

It belongs to the cytochrome b family. In terms of assembly, the cytochrome bc1 complex contains 11 subunits: 3 respiratory subunits (MT-CYB, CYC1 and UQCRFS1), 2 core proteins (UQCRC1 and UQCRC2) and 6 low-molecular weight proteins (UQCRH/QCR6, UQCRB/QCR7, UQCRQ/QCR8, UQCR10/QCR9, UQCR11/QCR10 and a cleavage product of UQCRFS1). This cytochrome bc1 complex then forms a dimer. Heme b serves as cofactor.

It is found in the mitochondrion inner membrane. Its function is as follows. Component of the ubiquinol-cytochrome c reductase complex (complex III or cytochrome b-c1 complex) that is part of the mitochondrial respiratory chain. The b-c1 complex mediates electron transfer from ubiquinol to cytochrome c. Contributes to the generation of a proton gradient across the mitochondrial membrane that is then used for ATP synthesis. The chain is Cytochrome b (MT-CYB) from Anthropoides virgo (Demoiselle crane).